Here is a 201-residue protein sequence, read N- to C-terminus: Recombination protein RecR (201 aa).

Residues 60-75 (CSVCGNVDTSDPCTIC) form a C4-type zinc finger. The Toprim domain occupies 83-178 (ATLIVVEDVS…RVTKLAHGVP (96 aa)).

The protein belongs to the RecR family.

In terms of biological role, may play a role in DNA repair. It seems to be involved in an RecBC-independent recombinational process of DNA repair. It may act with RecF and RecO. In Chelativorans sp. (strain BNC1), this protein is Recombination protein RecR.